A 114-amino-acid polypeptide reads, in one-letter code: Ribosome-binding factor A (114 aa).

The protein belongs to the RbfA family. In terms of assembly, monomer. Binds 30S ribosomal subunits, but not 50S ribosomal subunits or 70S ribosomes.

The protein resides in the cytoplasm. In terms of biological role, one of several proteins that assist in the late maturation steps of the functional core of the 30S ribosomal subunit. Associates with free 30S ribosomal subunits (but not with 30S subunits that are part of 70S ribosomes or polysomes). Required for efficient processing of 16S rRNA. May interact with the 5'-terminal helix region of 16S rRNA. The chain is Ribosome-binding factor A from Listeria innocua serovar 6a (strain ATCC BAA-680 / CLIP 11262).